We begin with the raw amino-acid sequence, 144 residues long: Large ribosomal subunit protein uL16 (144 aa).

The protein belongs to the universal ribosomal protein uL16 family. In terms of assembly, part of the 50S ribosomal subunit.

In terms of biological role, binds 23S rRNA and is also seen to make contacts with the A and possibly P site tRNAs. The chain is Large ribosomal subunit protein uL16 from Thermoanaerobacter sp. (strain X514).